The sequence spans 1166 residues: Myosin-1 (1166 aa).

Positions 1-13 (MSQKVTPFMQSLK) are enriched in polar residues. Positions 1 to 71 (MSQKVTPFMQ…AGDSEDSPYS (71 aa)) are disordered. Serine 14 is modified (phosphoserine). A compositionally biased stretch (polar residues) spans 32–45 (NSSGASVRLTNSNV). The Myosin N-terminal SH3-like domain occupies 112 to 161 (KKILQSWIQLPNGNWELGKILSTSGEESVISLPEGKVIKVISETLVPANP). The Myosin motor domain occupies 165 to 837 (DGVDDLMQLS…QIGVLEDTRN (673 aa)). Residues 256–263 (GESGAGKT) and 304–312 (NDNSSRFGK) contribute to the ATP site. 2 actin-binding regions span residues 589–623 (LFEK…KQHL) and 717–739 (LFQL…KPNN). 4 consecutive IQ domains span residues 839–868 (TLHG…GISI), 862–891 (LKRG…RHKA), 888–917 (RHKA…ASVV), and 911–940 (IADA…LKSG). The stretch at 955-1005 (SVLSELQRRVLKAEAALREKEEENDILQQRLQQYENRWSEYETKMKSMEEI) forms a coiled coil. Positions 1030-1065 (ARNSDASVNASDATDWDSSSNQFRSQTSNGVGSRLQ) are disordered. Polar residues predominate over residues 1032–1060 (NSDASVNASDATDWDSSSNQFRSQTSNGV).

It belongs to the TRAFAC class myosin-kinesin ATPase superfamily. Myosin family. Plant myosin class VIII subfamily. In terms of assembly, homodimer.

The protein resides in the cell junction. It is found in the plasmodesma. It localises to the cytoplasm. Its subcellular location is the cytoskeleton. The protein localises to the phragmoplast. The protein resides in the endosome. It is found in the endoplasmic reticulum. Its function is as follows. Myosin heavy chain that is required for the cell cycle-regulated transport of various organelles and proteins for their segregation. Functions by binding with its tail domain to receptor proteins on organelles and exerting force with its N-terminal motor domain against actin filaments, thereby transporting its cargo along polarized actin cables. Involved in endocytosis via its action in endosomal trafficking. This Arabidopsis thaliana (Mouse-ear cress) protein is Myosin-1 (VIII-1).